A 546-amino-acid polypeptide reads, in one-letter code: CTP synthase (546 aa).

Residues 1 to 265 (MTKYVFVTGG…DEIVCHKLNI (265 aa)) are amidoligase domain. Ser-13 lines the CTP pocket. Position 13 (Ser-13) interacts with UTP. Residues 14–19 (SLGKGI) and Asp-71 each bind ATP. Mg(2+)-binding residues include Asp-71 and Glu-139. CTP-binding positions include 146–148 (DIE), 186–191 (KTKPTQ), and Lys-222. Residues 186–191 (KTKPTQ) and Lys-222 contribute to the UTP site. Residues 290–543 (NIAFVGKYVD…VRAALAHQQK (254 aa)) form the Glutamine amidotransferase type-1 domain. Residue Gly-351 participates in L-glutamine binding. The Nucleophile; for glutamine hydrolysis role is filled by Cys-378. Residues 379–382 (LGMQ), Glu-402, and Arg-469 contribute to the L-glutamine site. Active-site residues include His-516 and Glu-518.

The protein belongs to the CTP synthase family. As to quaternary structure, homotetramer.

The catalysed reaction is UTP + L-glutamine + ATP + H2O = CTP + L-glutamate + ADP + phosphate + 2 H(+). The enzyme catalyses L-glutamine + H2O = L-glutamate + NH4(+). It catalyses the reaction UTP + NH4(+) + ATP = CTP + ADP + phosphate + 2 H(+). It participates in pyrimidine metabolism; CTP biosynthesis via de novo pathway; CTP from UDP: step 2/2. With respect to regulation, allosterically activated by GTP, when glutamine is the substrate; GTP has no effect on the reaction when ammonia is the substrate. The allosteric effector GTP functions by stabilizing the protein conformation that binds the tetrahedral intermediate(s) formed during glutamine hydrolysis. Inhibited by the product CTP, via allosteric rather than competitive inhibition. Functionally, catalyzes the ATP-dependent amination of UTP to CTP with either L-glutamine or ammonia as the source of nitrogen. Regulates intracellular CTP levels through interactions with the four ribonucleotide triphosphates. The protein is CTP synthase of Thiobacillus denitrificans (strain ATCC 25259 / T1).